A 188-amino-acid chain; its full sequence is Xanthine phosphoribosyltransferase (188 aa).

2 residues coordinate xanthine: Leu-20 and Asn-27. 5-phospho-alpha-D-ribose 1-diphosphate is bound at residue 127–131 (ANGNA). Lys-155 contacts xanthine.

This sequence belongs to the purine/pyrimidine phosphoribosyltransferase family. Xpt subfamily. As to quaternary structure, homodimer.

It is found in the cytoplasm. It carries out the reaction XMP + diphosphate = xanthine + 5-phospho-alpha-D-ribose 1-diphosphate. Its pathway is purine metabolism; XMP biosynthesis via salvage pathway; XMP from xanthine: step 1/1. In terms of biological role, converts the preformed base xanthine, a product of nucleic acid breakdown, to xanthosine 5'-monophosphate (XMP), so it can be reused for RNA or DNA synthesis. This is Xanthine phosphoribosyltransferase from Phocaeicola vulgatus (strain ATCC 8482 / DSM 1447 / JCM 5826 / CCUG 4940 / NBRC 14291 / NCTC 11154) (Bacteroides vulgatus).